We begin with the raw amino-acid sequence, 89 residues long: Small ribosomal subunit protein uS15 (89 aa).

It belongs to the universal ribosomal protein uS15 family. As to quaternary structure, part of the 30S ribosomal subunit. Forms a bridge to the 50S subunit in the 70S ribosome, contacting the 23S rRNA.

Functionally, one of the primary rRNA binding proteins, it binds directly to 16S rRNA where it helps nucleate assembly of the platform of the 30S subunit by binding and bridging several RNA helices of the 16S rRNA. Its function is as follows. Forms an intersubunit bridge (bridge B4) with the 23S rRNA of the 50S subunit in the ribosome. This Methylococcus capsulatus (strain ATCC 33009 / NCIMB 11132 / Bath) protein is Small ribosomal subunit protein uS15.